The following is an 88-amino-acid chain: MKLFLLTLLLVTLVITPSLIQTTMAGSSFCDSKCKLRCSKAGLADRCLKYCGICCEECKCVPSGTYGNKHECPCYRDKKNSKGKSKCP.

Residues 1–25 (MKLFLLTLLLVTLVITPSLIQTTMA) form the signal peptide.

This sequence belongs to the GASA family. In terms of processing, six disulfide bonds may be present. Expressed in tubers, stems, axillary and young floral buds, sepals, petals, stamens and carpels, but not in roots, stolons, shoot apex meristem or young leaves.

It is found in the secreted. It localises to the cell wall. Its function is as follows. Has an antimicrobial activity. Causes a rapid aggregation of both Gram-positive and Gram-negative bacteria, but the antimicrobial activity is not correlated with the capacity to aggregate bacteria. The protein is Snakin-1 (SN1) of Solanum tuberosum (Potato).